A 149-amino-acid polypeptide reads, in one-letter code: Large ribosomal subunit protein bL9 (149 aa).

Belongs to the bacterial ribosomal protein bL9 family.

Functionally, binds to the 23S rRNA. The sequence is that of Large ribosomal subunit protein bL9 from Edwardsiella ictaluri (strain 93-146).